We begin with the raw amino-acid sequence, 74 residues long: Defensin-like protein P322 (74 aa).

A signal peptide spans 1 to 19; the sequence is MRFFATFFLLAMLVVATKM. 4 cysteine pairs are disulfide-bonded: cysteine 30–cysteine 74, cysteine 41–cysteine 61, cysteine 47–cysteine 68, and cysteine 51–cysteine 70.

The protein belongs to the DEFL family. Protease inhibitor I18 (RTI/MTI-2) subfamily. As to expression, tuber.

It localises to the secreted. This is Defensin-like protein P322 from Solanum tuberosum (Potato).